Reading from the N-terminus, the 289-residue chain is Ribosomal protein L11 methyltransferase (289 aa).

S-adenosyl-L-methionine-binding residues include Thr-142, Gly-163, Asp-185, and Asn-226.

This sequence belongs to the methyltransferase superfamily. PrmA family.

Its subcellular location is the cytoplasm. It carries out the reaction L-lysyl-[protein] + 3 S-adenosyl-L-methionine = N(6),N(6),N(6)-trimethyl-L-lysyl-[protein] + 3 S-adenosyl-L-homocysteine + 3 H(+). Methylates ribosomal protein L11. This Legionella pneumophila (strain Corby) protein is Ribosomal protein L11 methyltransferase.